The sequence spans 195 residues: Nucleoside triphosphate pyrophosphatase (195 aa).

Catalysis depends on D70, which acts as the Proton acceptor.

It belongs to the Maf family. A divalent metal cation serves as cofactor.

It is found in the cytoplasm. The enzyme catalyses a ribonucleoside 5'-triphosphate + H2O = a ribonucleoside 5'-phosphate + diphosphate + H(+). It catalyses the reaction a 2'-deoxyribonucleoside 5'-triphosphate + H2O = a 2'-deoxyribonucleoside 5'-phosphate + diphosphate + H(+). Nucleoside triphosphate pyrophosphatase. May have a dual role in cell division arrest and in preventing the incorporation of modified nucleotides into cellular nucleic acids. The chain is Nucleoside triphosphate pyrophosphatase from Cyanothece sp. (strain PCC 7425 / ATCC 29141).